A 311-amino-acid chain; its full sequence is Homoserine kinase (311 aa).

Position 96 to 106 (96 to 106 (PLARGLGSSAA)) interacts with ATP.

The protein belongs to the GHMP kinase family. Homoserine kinase subfamily.

The protein localises to the cytoplasm. It catalyses the reaction L-homoserine + ATP = O-phospho-L-homoserine + ADP + H(+). The protein operates within amino-acid biosynthesis; L-threonine biosynthesis; L-threonine from L-aspartate: step 4/5. Functionally, catalyzes the ATP-dependent phosphorylation of L-homoserine to L-homoserine phosphate. The protein is Homoserine kinase of Natranaerobius thermophilus (strain ATCC BAA-1301 / DSM 18059 / JW/NM-WN-LF).